Here is a 529-residue protein sequence, read N- to C-terminus: MLMLLVRGTHYESLRSKVVLPTPLGGRGTEALVSECPSPDTGIRWRQSDEALRVNVGGVRRLLSARALARFPGTRLGRLQAAASEEQARRLCDDYDAAAREFYFDRHPGFFLGLLHFYRTGHLHVLDELCVFAFGQEADYWGLGENALAACCRARYLERRLSQPRAWDEDSDTPSSVDPCPDEISDVQRELARYGAARCGRLRRRLWLTMENPGYSLPSKLFSCVSISVVLASIAAMCIHSLPEYQAREAAAAVAAVAAGRSPEGVRDDPVLRRLEYFCIAWFSFEVSSRLLLAPSTRNFFCHPLNLIDIVSVLPFYLTLLAGVALGDQGGTGGKELGHLGKVVQVFRLMRIFRVLKLARHSTGLRSLGATLKHSYREVGILLLYLAVGVSVFSGVAYTAEKEEDVGFNTIPACWWWGTVSMTTVGYGDVVPVTVAGKLAASGCILGGILVVALPITIIFNKFSHFYRRQKALEAAVRNSNHQEFEDLLSSVDGVSEASLETSRETSQEGRSADLETQAPSEPPHPQMY.

The Cytoplasmic segment spans residues 1–217 (MLMLLVRGTH…LTMENPGYSL (217 aa)). Residues 218-239 (PSKLFSCVSISVVLASIAAMCI) form a helical membrane-spanning segment. Over 240–270 (HSLPEYQAREAAAAVAAVAAGRSPEGVRDDP) the chain is Extracellular. The chain crosses the membrane as a helical span at residues 271–293 (VLRRLEYFCIAWFSFEVSSRLLL). The Cytoplasmic portion of the chain corresponds to 294–304 (APSTRNFFCHP). Residues 305 to 322 (LNLIDIVSVLPFYLTLLA) traverse the membrane as a helical segment. At 323 to 340 (GVALGDQGGTGGKELGHL) the chain is on the extracellular side. The chain crosses the membrane as a helical; Voltage-sensor span at residues 341 to 361 (GKVVQVFRLMRIFRVLKLARH). The Cytoplasmic segment spans residues 362-376 (STGLRSLGATLKHSY). A helical membrane pass occupies residues 377-398 (REVGILLLYLAVGVSVFSGVAY). The Extracellular portion of the chain corresponds to 399 to 411 (TAEKEEDVGFNTI). The segment at residues 412–423 (PACWWWGTVSMT) is an intramembrane region (helical). Positions 424-429 (TVGYGD) match the Selectivity filter motif. The stretch at 424 to 431 (TVGYGDVV) is an intramembrane region. Topologically, residues 432 to 438 (PVTVAGK) are extracellular. The helical transmembrane segment at 439 to 467 (LAASGCILGGILVVALPITIIFNKFSHFY) threads the bilayer. At 468–529 (RRQKALEAAV…PSEPPHPQMY (62 aa)) the chain is on the cytoplasmic side. A disordered region spans residues 494-529 (GVSEASLETSRETSQEGRSADLETQAPSEPPHPQMY). Basic and acidic residues predominate over residues 502–514 (TSRETSQEGRSAD).

This sequence belongs to the potassium channel family. S (TC 1.A.1.2) subfamily. Kv9.1/KCNS1 sub-subfamily. In terms of assembly, heterotetramer with KCNB1. Heterotetramer with KCNB2. Does not form homomultimers.

Its subcellular location is the cell membrane. Potassium channel regulatory subunit that modulate the delayed rectifier voltage-gated potassium channel activity of KCNB1 and KCNB2 by altering their kinetics, expression levels, and shifting the half-inactivation potential to more polarized values. While it does not form functional channels on its own, it can form functional heterotetrameric channels with KCNB1 and KCNB2. Each regulatory subunit has unique regulatory properties that can lead to extensive inhibition, significant changes in kinetics, and/or substantial shifts in the voltage dependencies of the inactivation process. The sequence is that of Delayed-rectifier potassium channel regulatory subunit KCNS1 from Chlorocebus aethiops (Green monkey).